The sequence spans 159 residues: Transcriptional repressor NrdR (159 aa).

A zinc finger spans residues 3–34; that stretch reads CPFCNAADSKVIDSRLAAEGCQIRRRRECISC. Residues 49–139 form the ATP-cone domain; that stretch reads PRVIKSNGKN…VYQDFQDVEA (91 aa).

Belongs to the NrdR family. Zn(2+) serves as cofactor.

Negatively regulates transcription of bacterial ribonucleotide reductase nrd genes and operons by binding to NrdR-boxes. This chain is Transcriptional repressor NrdR, found in Acinetobacter baylyi (strain ATCC 33305 / BD413 / ADP1).